The chain runs to 336 residues: MVASRNPQTARFCWQYLQLEQSLDFPDGELLRDEAVQETIYQQLFAPNAPTPLPPARYRLRVLKELTSRIESAIEDWETHGISDNLMDAMAELVAQPLPSEAEAAQERCYVTYYLSLLEGGLEKPHITLLESRSLISASGTTGLRTWEAALHLGQFLSVNSGLVKDKRVLELGTGTGYLAVLCAKYLGTSHVIASDGSEEVVEKLSDNLFVNGLQDSDKVQPMELKWGHALLGTEEEHWNGGRKIDVVLGADITYDVSVIPALIATLEELVDLYPGISIIIAATERNRETYETFLAACGRRGFSVTPESFPVPSRAEQKGPFYKDGTPIHICQLRR.

S-adenosyl-L-methionine-binding positions include Trp147, 173-175 (GTG), Asp196, Leu232, and Ala251.

This sequence belongs to the class I-like SAM-binding methyltransferase superfamily. EEF2KMT family.

It localises to the cytoplasm. Its function is as follows. S-adenosyl-L-methionine-dependent protein-lysine N-methyltransferase that methylates elongation factor 2. The sequence is that of Protein-lysine N-methyltransferase EFM3 from Chaetomium thermophilum (strain DSM 1495 / CBS 144.50 / IMI 039719) (Thermochaetoides thermophila).